The chain runs to 457 residues: tRNA-2-methylthio-N(6)-dimethylallyladenosine synthase (457 aa).

One can recognise an MTTase N-terminal domain in the interval 3-120; the sequence is KKVYVKTFGC…LPQMIDARRE (118 aa). Residues C12, C49, C83, C157, C161, and C164 each contribute to the [4Fe-4S] cluster site. The region spanning 143–377 is the Radical SAM core domain; the sequence is RVEGPSAFVS…QATIEENVAR (235 aa). The 68-residue stretch at 380 to 447 folds into the TRAM domain; that stretch reads QSMLGKVERI…PHSLRGELVL (68 aa).

It belongs to the methylthiotransferase family. MiaB subfamily. Monomer. [4Fe-4S] cluster serves as cofactor.

It localises to the cytoplasm. The catalysed reaction is N(6)-dimethylallyladenosine(37) in tRNA + (sulfur carrier)-SH + AH2 + 2 S-adenosyl-L-methionine = 2-methylsulfanyl-N(6)-dimethylallyladenosine(37) in tRNA + (sulfur carrier)-H + 5'-deoxyadenosine + L-methionine + A + S-adenosyl-L-homocysteine + 2 H(+). Catalyzes the methylthiolation of N6-(dimethylallyl)adenosine (i(6)A), leading to the formation of 2-methylthio-N6-(dimethylallyl)adenosine (ms(2)i(6)A) at position 37 in tRNAs that read codons beginning with uridine. This chain is tRNA-2-methylthio-N(6)-dimethylallyladenosine synthase, found in Burkholderia thailandensis (strain ATCC 700388 / DSM 13276 / CCUG 48851 / CIP 106301 / E264).